Consider the following 609-residue polypeptide: Membrane protein insertase YidC (609 aa).

A run of 5 helical transmembrane segments spans residues 8–28 (LILATALSFLVILVWFILFPP), 381–401 (MGWSIIGLTLIIKAIVFPLAL), 451–471 (LPILLQIPIFFSLYKVIFVTI), 509–529 (SLTATILIGILPLLLGISMWL), and 545–565 (IFAWMPWVFMFMLGSFASGLV).

It belongs to the OXA1/ALB3/YidC family. Type 1 subfamily. In terms of assembly, interacts with the Sec translocase complex via SecD. Specifically interacts with transmembrane segments of nascent integral membrane proteins during membrane integration.

The protein resides in the cell inner membrane. In terms of biological role, required for the insertion and/or proper folding and/or complex formation of integral membrane proteins into the membrane. Involved in integration of membrane proteins that insert both dependently and independently of the Sec translocase complex, as well as at least some lipoproteins. Aids folding of multispanning membrane proteins. This is Membrane protein insertase YidC from Ruegeria pomeroyi (strain ATCC 700808 / DSM 15171 / DSS-3) (Silicibacter pomeroyi).